The chain runs to 30 residues: Photosystem I reaction center subunit XII (30 aa).

The helical transmembrane segment at Ile-7 to Thr-26 threads the bilayer.

It belongs to the PsaM family.

The protein localises to the plastid. It is found in the chloroplast thylakoid membrane. The polypeptide is Photosystem I reaction center subunit XII (Gracilaria tenuistipitata var. liui (Red alga)).